Reading from the N-terminus, the 830-residue chain is Histone acetyltransferase KAT2A (830 aa).

The disordered stretch occupies residues 1 to 94 (MAEPSQAPNP…RKAQVRGLPR (94 aa)). Ala2 carries the N-acetylalanine modification. Pro residues-rich tracts occupy residues 7–33 (APNP…PAPS) and 41–51 (APTPAPAPAPA). Gly residues predominate over residues 58–69 (TGSGGAGVGSGG). The span at 83–94 (SQRKAQVRGLPR) shows a compositional bias: basic residues. Phosphoserine is present on Ser302. Positions 398–417 (SFSPSMGGGSNSSLSLDSAG) are enriched in low complexity. The interval 398-426 (SFSPSMGGGSNSSLSLDSAGTEPMPAGEK) is disordered. The region spanning 496-649 (VIGNSLTPKA…GATLMECELN (154 aa)) is the N-acetyltransferase domain. N6-acetyllysine is present on Lys542. Glu568 functions as the Proton donor/acceptor in the catalytic mechanism. Acetyl-CoA is bound by residues 572–574 (CAV), 579–585 (QVKGYGT), and Tyr610. Residues 572–574 (CAV), 579–585 (QVKGYGT), and Tyr610 contribute to the succinyl-CoA site. A Glycyl lysine isopeptide (Lys-Gly) (interchain with G-Cter in SUMO2) cross-link involves residue Lys721. The region spanning 721-825 (KDPDQLYTTL…KFFYFKLKEG (105 aa)) is the Bromo domain. Thr728 is modified (phosphothreonine). Residues Lys752 and Lys784 each participate in a glycyl lysine isopeptide (Lys-Gly) (interchain with G-Cter in SUMO2) cross-link.

The protein belongs to the acetyltransferase family. GCN5 subfamily. In terms of assembly, interacts with EP300, CREBBP and ADA2. Component of the TFTC-HAT complex, at least composed of TAF5L, TAF6L, TAF3, TADA3L, SUPT3H/SPT3, TAF2/TAFII150, TAF4/TAFII135, TAF5/TAFII100, KAT2A/GCN5L2, TAF10 and TRRAP. Component of the STAGA transcription coactivator-HAT complex, at least composed of SUPT3H, KAT2A, SUPT7L, TAF5L, TAF6L, TADA3L, TAD1L, TAF10, TAF12, TRRAP and TAF9. The STAGA core complex is associated with a subcomplex required for histone deubiquitination composed of ATXN7L3, ENY2 and USP22. Component of the ADA2A-containing complex (ATAC), composed of KAT14, KAT2A, TADA2L, TADA3L, ZZ3, MBIP, WDR5, YEATS2, CCDC101 and DR1. In the complex, it probably interacts directly with KAT14, MBIP and WDR5. Interacts with PML. Interacts with CEBPB. Interacts with TACC1, TACC2 and TACC3. Interacts with RELA. Interacts with NFATC2. Interacts with TBX5. Interacts with PLK4. Associates with the 2-oxoglutarate dehydrogenase complex. Interacts with XPC; leading to KAT2A recruitment to promoters and subsequent acetylation of histones. Interacts with ERCC3/XPB; leading to KAT2A recruitment to promoters and subsequent acetylation of histones. Interacts with ISL1. Interactions of ISL1 with MLIP1 or KAT2A may be mutually exclusive. In terms of processing, acetylated at Lys-542, inhibiting the protein acetyltransferase activity. Deacetylation at Lys-542 by SIRT6 promotes phosphorylation at Ser-302 and Thr-728 and subsequent activation of the protein acetyltransferase activity, leading to acetylation and inactivation of PPARGC1A. As to expression, in brain, highly expressed in the hippocampal CA1 region (at protein level). Also expressed in the hippocampal subregions CA3 and the dentate gyrus as well as in the cortex and prefrontal cortex. Expressed at low level in the cerebellum.

It localises to the nucleus. It is found in the chromosome. Its subcellular location is the cytoplasm. The protein resides in the cytoskeleton. The protein localises to the microtubule organizing center. It localises to the centrosome. It carries out the reaction L-lysyl-[histone] + acetyl-CoA = N(6)-acetyl-L-lysyl-[histone] + CoA + H(+). The enzyme catalyses L-lysyl-[protein] + acetyl-CoA = N(6)-acetyl-L-lysyl-[protein] + CoA + H(+). It catalyses the reaction succinyl-CoA + L-lysyl-[protein] = N(6)-succinyl-L-lysyl-[protein] + CoA + H(+). The catalysed reaction is glutaryl-CoA + L-lysyl-[protein] = N(6)-glutaryl-L-lysyl-[protein] + CoA + H(+). Functionally, protein lysine acyltransferase that can act as a acetyltransferase, glutaryltransferase, succinyltransferase or malonyltransferase, depending on the context. Acts as a histone lysine succinyltransferase: catalyzes succinylation of histone H3 on 'Lys-79' (H3K79succ), with a maximum frequency around the transcription start sites of genes. Succinylation of histones gives a specific tag for epigenetic transcription activation. Association with the 2-oxoglutarate dehydrogenase complex, which provides succinyl-CoA, is required for histone succinylation. In different complexes, functions either as an acetyltransferase (HAT) or as a succinyltransferase: in the SAGA and ATAC complexes, acts as a histone acetyltransferase. Has significant histone acetyltransferase activity with core histones, but not with nucleosome core particles. Has a a strong preference for acetylation of H3 at 'Lys-9' (H3K9ac). Acetylation of histones gives a specific tag for epigenetic transcription activation. Recruited by the XPC complex at promoters, where it specifically mediates acetylation of histone variant H2A.Z.1/H2A.Z, thereby promoting expression of target genes. Involved in long-term memory consolidation and synaptic plasticity: acts by promoting expression of a hippocampal gene expression network linked to neuroactive receptor signaling. Acts as a positive regulator of T-cell activation: upon TCR stimulation, recruited to the IL2 promoter following interaction with NFATC2 and catalyzes acetylation of histone H3 at 'Lys-9' (H3K9ac), leading to promote IL2 expression. Required for growth and differentiation of craniofacial cartilage and bone by regulating acetylation of histone H3 at 'Lys-9' (H3K9ac). Regulates embryonic stem cell (ESC) pluripotency and differentiation. Also acetylates non-histone proteins, such as CEBPB, MRE11, PPARGC1A, PLK4 and TBX5. Involved in heart and limb development by mediating acetylation of TBX5, acetylation regulating nucleocytoplasmic shuttling of TBX5. Acts as a negative regulator of centrosome amplification by mediating acetylation of PLK4. Acts as a negative regulator of gluconeogenesis by mediating acetylation and subsequent inactivation of PPARGC1A. Also acts as a histone glutaryltransferase: catalyzes glutarylation of histone H4 on 'Lys-91' (H4K91glu), a mark that destabilizes nucleosomes by promoting dissociation of the H2A-H2B dimers from nucleosomes. This is Histone acetyltransferase KAT2A from Mus musculus (Mouse).